We begin with the raw amino-acid sequence, 273 residues long: Manganese catalase (273 aa).

Glu35 contributes to the Mn(2+) binding site. Ca(2+) contacts are provided by Asp57 and Asp61. 4 residues coordinate Mn(2+): Glu66, His69, Glu149, and His182. Asn220, Ser222, and Gly224 together coordinate Ca(2+). Residues 254 to 273 (EKPELKPAPPFVHNTLPGRE) form a disordered region.

The protein belongs to the manganese catalase family. Requires Ca(2+) as cofactor. Mn(2+) serves as cofactor.

The catalysed reaction is 2 H2O2 = O2 + 2 H2O. Catalyzes the decomposition of hydrogen peroxide into water and oxygen. The polypeptide is Manganese catalase (ydbD) (Bacillus subtilis (strain 168)).